The following is an 80-amino-acid chain: SGDLGAERYAKMCKSCHGADGSNAAMSRALKGLPAEEVKAALIGYKEQTYGGKKKGMMERVVKSLTDEDIEVLATHIGTF.

Heme c contacts are provided by Cys-13, Cys-16, His-17, and Met-58.

Post-translationally, binds 1 heme c group covalently per subunit.

It is found in the periplasm. Functionally, natural electron acceptor for a formate dehydrogenase. This is Cytochrome c-553 from Desulfomicrobium norvegicum (strain DSM 1741 / NCIMB 8310) (Desulfovibrio baculatus (strain Norway 4)).